The sequence spans 93 residues: DNA-binding protein HU 1 (93 aa).

Belongs to the bacterial histone-like protein family. As to quaternary structure, homodimer.

The protein localises to the cytoplasm. It localises to the nucleoid. In terms of biological role, histone-like DNA-binding protein which is capable of wrapping DNA to stabilize it, and thus to prevent its denaturation under extreme environmental conditions. This is DNA-binding protein HU 1 (hup1) from Streptomyces coelicolor (strain ATCC BAA-471 / A3(2) / M145).